Reading from the N-terminus, the 364-residue chain is MKKNNRVVVGMSGGVDSSVSAYLLKEQGFDVIGVTMQIWQDKDEEAVRVEGGCCSLSAVNDARRVANKIGIKYYVMNFKDVFKEKVIDYFVDEYLKGRTPNPCIACNKYIKFEELLKRAWMIDAYYVATGHYAIKEYDEERGRYLLKKSVDTSKDQTYVLYNLTQTQLEHILFPLGKYKKDEVRELAKNLGLPVASKPDSQEICFVTDNDYGKFIRENAKEEIKPGEFRDTRGRFLGYHKGIIHYTIGQRKGLGISVGKPLYVVDIDAENNVVVLGYGDEVFGDELISYNNNFISIDKLEREMRVKAKIRYNAKEQDAVIRPLEDGKVFVKFDNPQRAITPGQSVVFYEGDIVVGGGTIERKVR.

Residues 10 to 17 (GMSGGVDS) and Met-36 contribute to the ATP site. Catalysis depends on Cys-106, which acts as the Nucleophile. Cysteines 106 and 204 form a disulfide. ATP is bound at residue Gly-130. Residues 154–156 (KDQ) are interaction with tRNA. The active-site Cysteine persulfide intermediate is Cys-204. Positions 310 to 311 (RY) are interaction with tRNA.

It belongs to the MnmA/TRMU family.

Its subcellular location is the cytoplasm. The enzyme catalyses S-sulfanyl-L-cysteinyl-[protein] + uridine(34) in tRNA + AH2 + ATP = 2-thiouridine(34) in tRNA + L-cysteinyl-[protein] + A + AMP + diphosphate + H(+). Functionally, catalyzes the 2-thiolation of uridine at the wobble position (U34) of tRNA, leading to the formation of s(2)U34. In Thermoanaerobacter pseudethanolicus (strain ATCC 33223 / 39E) (Clostridium thermohydrosulfuricum), this protein is tRNA-specific 2-thiouridylase MnmA 1.